The primary structure comprises 355 residues: UDP-N-acetylglucosamine--N-acetylmuramyl-(pentapeptide) pyrophosphoryl-undecaprenol N-acetylglucosamine transferase (355 aa).

UDP-N-acetyl-alpha-D-glucosamine is bound by residues 11 to 13 (TAG), Arg164, Ser194, and Gln289.

The protein belongs to the glycosyltransferase 28 family. MurG subfamily.

It localises to the cell membrane. It carries out the reaction di-trans,octa-cis-undecaprenyl diphospho-N-acetyl-alpha-D-muramoyl-L-alanyl-D-glutamyl-meso-2,6-diaminopimeloyl-D-alanyl-D-alanine + UDP-N-acetyl-alpha-D-glucosamine = di-trans,octa-cis-undecaprenyl diphospho-[N-acetyl-alpha-D-glucosaminyl-(1-&gt;4)]-N-acetyl-alpha-D-muramoyl-L-alanyl-D-glutamyl-meso-2,6-diaminopimeloyl-D-alanyl-D-alanine + UDP + H(+). It participates in cell wall biogenesis; peptidoglycan biosynthesis. Cell wall formation. Catalyzes the transfer of a GlcNAc subunit on undecaprenyl-pyrophosphoryl-MurNAc-pentapeptide (lipid intermediate I) to form undecaprenyl-pyrophosphoryl-MurNAc-(pentapeptide)GlcNAc (lipid intermediate II). This is UDP-N-acetylglucosamine--N-acetylmuramyl-(pentapeptide) pyrophosphoryl-undecaprenol N-acetylglucosamine transferase from Lachnoclostridium phytofermentans (strain ATCC 700394 / DSM 18823 / ISDg) (Clostridium phytofermentans).